Here is a 559-residue protein sequence, read N- to C-terminus: TBC1 domain family member 24 (559 aa).

A 1,2-diacyl-sn-glycero-3-phospho-(1D-myo-inositol) is bound by residues Lys-36, Arg-40, Lys-238, Arg-242, and 293-297 (RLFSR). Residues 47 to 262 (SHALRGKVYQ…KVRAGQPLES (216 aa)) enclose the Rab-GAP TBC domain. A TLDc domain is found at 343 to 554 (EIVSVREMRD…IAAVEAWGFQ (212 aa)). 2 positions are modified to phosphoserine: Ser-473 and Ser-480.

In terms of assembly, interacts with ARF6. As to expression, highest expression in brain.

It localises to the cell membrane. The protein resides in the cytoplasm. It is found in the cytoplasmic vesicle membrane. Its subcellular location is the presynapse. Functionally, may act as a GTPase-activating protein for Rab family protein(s). Involved in neuronal projections development, probably through a negative modulation of ARF6 function. Involved in the regulation of synaptic vesicle trafficking. The polypeptide is TBC1 domain family member 24 (TBC1D24) (Homo sapiens (Human)).